Here is a 588-residue protein sequence, read N- to C-terminus: ATP-dependent lipid A-core flippase (588 aa).

6 consecutive transmembrane segments (helical) span residues Phe23–Gly43, Phe56–Thr76, Asp141–Met161, Val162–Val182, Leu257–Ile277, and Thr278–Met298. Positions Leu28–Arg310 constitute an ABC transmembrane type-1 domain. An ABC transporter domain is found at Ile342–Val576. Gly375 to Thr382 provides a ligand contact to ATP.

This sequence belongs to the ABC transporter superfamily. Lipid exporter (TC 3.A.1.106) family. As to quaternary structure, homodimer.

The protein localises to the cell inner membrane. It catalyses the reaction ATP + H2O + lipid A-core oligosaccharideSide 1 = ADP + phosphate + lipid A-core oligosaccharideSide 2.. In terms of biological role, involved in lipopolysaccharide (LPS) biosynthesis. Translocates lipid A-core from the inner to the outer leaflet of the inner membrane. Transmembrane domains (TMD) form a pore in the inner membrane and the ATP-binding domain (NBD) is responsible for energy generation. In Legionella pneumophila (strain Lens), this protein is ATP-dependent lipid A-core flippase.